A 307-amino-acid polypeptide reads, in one-letter code: OTU domain-containing protein 2 (307 aa).

Disordered regions lie at residues 23–46 (ENKD…RKEV) and 96–130 (SRDE…AKRD). The segment covering 103–114 (QNVPVQQQQQGQ) has biased composition (low complexity). The OTU domain occupies 167–307 (LKQFDIQPDG…GEHYNSLHDS (141 aa)).

The protein is OTU domain-containing protein 2 (OTU2) of Saccharomyces cerevisiae (strain ATCC 204508 / S288c) (Baker's yeast).